A 363-amino-acid chain; its full sequence is MNILQEPIDFLKKEELKNIDLSQMSKKERYKIWKRIPKCELHCHLDLCFSADFFVSCIRKYNLQPNLSDEEVLDYYLFAKGGKSLGEFVEKAIKVADIFHDYEVIEDLAKHAVFNKYKEGVVLMEFRYSPTFVAFKYNLDIELIHQAIVKGIKEVVELLDHKIHVALMCIGDTGHEAANIKASADFCLKHKADFVGFDHGGHEVDLKEYKEIFDYVRESGVPLSVHAGEDVTLPNLNTLYSAIQVLKVERIGHGIRVAESQELIDMVKEKNILLEVCPISNVLLKNAKSMDTHPIRQLYDAGVKVSVNSDDPGMFLTNINDDYEELYTHLNFTLEDFMKMNEWALEKSFMDSNIKDKIKNLYF.

2 residues coordinate Zn(2+): His-42 and His-44. A purine D-ribonucleoside contacts are provided by residues 44 to 46 (HLD), Asp-172, and Gly-201. The tract at residues 170 to 184 (IGDTGHEAANIKASA) is gating helix loop; regulates binding affinity for substrates and thus substrate selectivity. His-226 contributes to the Zn(2+) binding site. Residues Glu-229, His-253, and Asp-310 each contribute to the a purine D-ribonucleoside site. Asp-310 lines the Zn(2+) pocket.

Belongs to the metallo-dependent hydrolases superfamily. Adenosine and AMP deaminases family. The cofactor is Zn(2+).

It catalyses the reaction adenosine + H2O + H(+) = inosine + NH4(+). The enzyme catalyses S-methyl-5'-thioadenosine + H2O + H(+) = S-methyl-5'-thioinosine + NH4(+). The protein operates within purine metabolism; purine nucleoside salvage. Inhibited by coformycin and methylthiocoformycin (MT-coformycin). Catalyzes the hydrolytic deamination of adenosine to produce inosine. Unlike mammalian adenosine deaminases, also catalyzes the deamination of 5'-methylthioadenosine (MTA), a by-product of polyamine biosynthesis, to produce 5'-methylthioinosine (MTI). Plays an essential role in the purine salvage pathway which allows the parasite to use host cell purines for the synthesis of nucleic acids. The chain is Adenosine deaminase from Plasmodium vivax (strain Salvador I).